The primary structure comprises 440 residues: MPRVKAAQAGRPGPAKRRLAEQFAAGEVLTDMSRKEWKLGLPIGQGGFGCIYLADTNSSKPVGSDAPCVVKVEPSDNGPLFTELKFYQRAAKPEQIQKWIRTHKLKYLGVPKYWGSGLHDKNGKSYRFMIMDRFGSDLQKIYEANAKRFSRKTVLQLSLRILDILEYIHEHEYVHGDIKASNLLLSHKNPDQVYLVDYGLAYRYCPDGVHKEYKEDPKRCHDGTLEFTSIDAHKGVAPSRRGDLEILGYCMIQWLSGCLPWEDNLKDPNYVRDSKIRYRDNVAALMEKCFPEKNKPGEIAKYMESVKLLEYTEKPLYQNLRDILLQGLKAIGSKDDGKLDFSAVENGSVKTRPASKKRKKEAEESAVCAVEDMECSDTQVQEAAQTRSVESQGAIHGSMSQPAAGCSSSDSSRRQQHLGLEQDMLRLDRRGSRTRKKAQK.

A Protein kinase domain is found at 37-317 (WKLGLPIGQG…LLEYTEKPLY (281 aa)). ATP is bound by residues 43–51 (IGQGGFGCI) and K71. Residue K71 forms a Glycyl lysine isopeptide (Lys-Gly) (interchain with G-Cter in SUMO2) linkage. D177 acts as the Proton acceptor in catalysis. S342 carries the post-translational modification Phosphoserine; by PLK3. S376 carries the post-translational modification Phosphoserine. The residue at position 378 (T378) is a Phosphothreonine. Polar residues-rich tracts occupy residues 379–391 (QVQEAAQTRSVES) and 398–410 (SMSQPAAGCSSSD). The interval 379–440 (QVQEAAQTRS…GSRTRKKAQK (62 aa)) is disordered. Residues 387-393 (RSVESQG) form a required for interaction with the nucleosome region.

The protein belongs to the protein kinase superfamily. CK1 Ser/Thr protein kinase family. VRK subfamily. In terms of assembly, interacts with HDAC1, KAT2B, SETDB1, KDM3A and KDM4A. Associates with the nucleosome through interactions with nucleosome DNA, histone H2A and histone H2B; the interaction with H2A and H2B is mediated by the nucleosome acidic patch, a cluster of negatively charged residues of H2A and H2B forming a cleft within the nucleosome core. Post-translationally, autophosphorylated at various serine and threonine residues. Autophosphorylation does not impair its ability to phosphorylate p53/TP53. Phosphorylation by PLK3 leads to induction of Golgi fragmentation during mitosis. Highly expressed in testis. Expressed in liver, kidney and muscle. Weakly expressed in thymus, bone marrow and spleen.

The protein resides in the nucleus. It is found in the cytoplasm. Its subcellular location is the cajal body. The catalysed reaction is L-seryl-[protein] + ATP = O-phospho-L-seryl-[protein] + ADP + H(+). It catalyses the reaction L-threonyl-[protein] + ATP = O-phospho-L-threonyl-[protein] + ADP + H(+). Its activity is regulated as follows. Active in presence of Mn(2+), Mg(2+) and Zn(2+), but is not functional with Ca(2+) or Cu(2+). Has a higher affinity for Mn(2+) than for Mg(2+). RAN inhibits its autophosphorylation and its ability to phosphorylate histone H3. Functionally, serine/threonine kinase involved in the regulation of key cellular processes including the cell cycle, nuclear condensation, transcription regulation, and DNA damage response. Controls chromatin organization and remodeling by mediating phosphorylation of histone H3 on 'Thr-4' and histone H2AX (H2aXT4ph). It also phosphorylates KAT5 in response to DNA damage, promoting KAT5 association with chromatin and histone acetyltransferase activity. Is involved in the regulation of cell cycle progression of neural progenitors, and is required for proper cortical neuronal migration. Is involved in neurite elongation and branching in motor neurons, and has an essential role in Cajal bodies assembly, acting through COIL phosphorylation and the control of coilin degradation. Involved in Golgi disassembly during the cell cycle: following phosphorylation by PLK3 during mitosis, required to induce Golgi fragmentation. Phosphorylates BANF1: disrupts its ability to bind DNA, reduces its binding to LEM domain-containing proteins and causes its relocalization from the nucleus to the cytoplasm. Phosphorylates TP53BP1 and p53/TP53 on 'Thr-18', preventing the interaction between p53/TP53 and MDM2. Phosphorylates ATF2 which activates its transcriptional activity. Phosphorylates JUN. The protein is Serine/threonine-protein kinase VRK1 of Mus musculus (Mouse).